Consider the following 1502-residue polypeptide: Heme-responsive zinc finger transcription factor HAP1 (1502 aa).

Polar residues predominate over residues 1 to 50; sequence MSNTPYNSSVPSIASMTQSSVSRSPNMHTATTPGANTSSNSPPLHMSSDS. The segment at 1 to 56 is disordered; the sequence is MSNTPYNSSVPSIASMTQSSVSRSPNMHTATTPGANTSSNSPPLHMSSDSSKIKRK. Residues C64, C67, C74, C81, C84, and C93 each contribute to the Zn(2+) site. Residues 64–93 constitute a DNA-binding region (zn(2)-C6 fungal-type); that stretch reads CTICRKRKVKCDKLRPHCQQCTKTGVAHLC. Residues 105–134 are a coiled coil; it reads EKELLKDNELKKLRERVKSLEKTLSKVHSS. The segment at 126-208 is disordered; the sequence is KTLSKVHSSP…ANSSSLSISN (83 aa). The span at 130–142 shows a compositional bias: low complexity; that stretch reads KVHSSPSSNSLKS. 2 stretches are compositionally biased toward polar residues: residues 143–152 and 160–176; these read YNTPESSNLF and TLVN…SHMH. The segment covering 177 to 208 has biased composition (low complexity); that stretch reads QQQQQQQQQEQQQDFSRSANANANSSSLSISN. Residues 244–444 form a heme-responsive; required for HMC formation region; the sequence is KGDPYLKLLW…NTIPHHQPQS (201 aa). HRM repeat units lie at residues 280-285, 299-304, 323-328, 347-352, 389-394, and 415-420; these read KCPINH, KCPVDH, RCPVDH, and RCPIDH. Polar residues-rich tracts occupy residues 432-447 and 706-734; these read STHN…SGSH and QLNA…NPTL. Disordered regions lie at residues 432–458 and 706–767; these read STHN…SRKH and QLNA…KENQ. Residues 735–759 are compositionally biased toward low complexity; it reads NNNMSAATTNSSSRSGSADSRSGSN. The HRM 7 repeat unit spans residues 1192 to 1197; sequence KCPVYQ. The interval 1384–1411 is disordered; the sequence is TANTDTSANGSALSTLTSPQGSDLASNS. The span at 1388–1411 shows a compositional bias: polar residues; it reads DTSANGSALSTLTSPQGSDLASNS.

As to quaternary structure, binds DNA as a homodimer. Interacts with SRO9 and YDJ1. In the absence of heme, binds to at least four cellular proteins, including YDJ1 and SRO9, forming a high-molecular-weight complex (HMC) which results in repression of its activity and dictates its DNA-binding specificity.

Its subcellular location is the nucleus. Regulation of oxygen dependent gene expression. It modulates the expression of Iso-1 (CYP1) and Iso-2 (CYP3) cytochrome c. In response to heme, promotes transcription of genes encoding functions required for respiration, controlling oxidative damage and repression of anaerobic genes. Binds to the sequence 5'-CGGNNNTNNCGG-3'. Is non-functional in terms of iso-1 cytochrome c expression in strain S288c and its derivatives. This is Heme-responsive zinc finger transcription factor HAP1 (HAP1) from Saccharomyces cerevisiae (strain ATCC 204508 / S288c) (Baker's yeast).